Reading from the N-terminus, the 180-residue chain is METEVHEAAGAAGHAGQAVGMPQLNFDYWPNQIFWLLVTLVAIYFLLTRVALPRIGAVLAERRGTITNDLAAAEELKQKAVLAEKAYNEALAKARAEAQAIIAETRAAIQAELAVATAKADAEIAAKSAESESRISEIRAGALQSVTEVAKDTAEALVAALGGKSDAASVDAAVAARMKG.

The chain crosses the membrane as a helical span at residues 33 to 53 (IFWLLVTLVAIYFLLTRVALP).

This sequence belongs to the ATPase B chain family. In terms of assembly, F-type ATPases have 2 components, F(1) - the catalytic core - and F(0) - the membrane proton channel. F(1) has five subunits: alpha(3), beta(3), gamma(1), delta(1), epsilon(1). F(0) has three main subunits: a(1), b(2) and c(10-14). The alpha and beta chains form an alternating ring which encloses part of the gamma chain. F(1) is attached to F(0) by a central stalk formed by the gamma and epsilon chains, while a peripheral stalk is formed by the delta and b chains.

The protein localises to the cell inner membrane. Functionally, f(1)F(0) ATP synthase produces ATP from ADP in the presence of a proton or sodium gradient. F-type ATPases consist of two structural domains, F(1) containing the extramembraneous catalytic core and F(0) containing the membrane proton channel, linked together by a central stalk and a peripheral stalk. During catalysis, ATP synthesis in the catalytic domain of F(1) is coupled via a rotary mechanism of the central stalk subunits to proton translocation. Its function is as follows. Component of the F(0) channel, it forms part of the peripheral stalk, linking F(1) to F(0). The b'-subunit is a diverged and duplicated form of b found in plants and photosynthetic bacteria. The polypeptide is ATP synthase subunit b 2 (atpF2) (Cereibacter sphaeroides (strain ATCC 17025 / ATH 2.4.3) (Rhodobacter sphaeroides)).